The primary structure comprises 181 residues: Probable RNA 2'-phosphotransferase (181 aa).

The protein belongs to the KptA/TPT1 family.

Removes the 2'-phosphate from RNA via an intermediate in which the phosphate is ADP-ribosylated by NAD followed by a presumed transesterification to release the RNA and generate ADP-ribose 1''-2''-cyclic phosphate (APPR&gt;P). May function as an ADP-ribosylase. This chain is Probable RNA 2'-phosphotransferase, found in Nostoc punctiforme (strain ATCC 29133 / PCC 73102).